The sequence spans 81 residues: Small ribosomal subunit protein bS18 (81 aa).

This sequence belongs to the bacterial ribosomal protein bS18 family. Part of the 30S ribosomal subunit. Forms a tight heterodimer with protein bS6.

Its function is as follows. Binds as a heterodimer with protein bS6 to the central domain of the 16S rRNA, where it helps stabilize the platform of the 30S subunit. This chain is Small ribosomal subunit protein bS18, found in Parvibaculum lavamentivorans (strain DS-1 / DSM 13023 / NCIMB 13966).